An 899-amino-acid chain; its full sequence is Tubulin glycylase 3F (899 aa).

Residues 471–835 form the TTL domain; sequence FKDVIQIIKN…TEYYQIQNWK (365 aa). ATP is bound by residues 642-645, lysine 663, and aspartate 665; that span reads QKYI.

The protein localises to the cytoplasm. Its subcellular location is the cytoskeleton. It localises to the cilium basal body. Probable glycylase which modifies tubulin, generating side chains of glycine on the gamma-carboxyl groups of specific glutamate residues within the C-terminal tail of tubulin. In Tetrahymena thermophila (strain SB210), this protein is Tubulin glycylase 3F (TTLL3F).